The chain runs to 1294 residues: ATPase PglY (1294 aa).

Positions 1205–1263 (TQAAATPPPAPAASQPTAGDLSLDTPTSDPRIPYTSQETPTSSGGAGTARTSGGRRTTA) are disordered. Polar residues predominate over residues 1228-1244 (DTPTSDPRIPYTSQETP). Residues 1252–1263 (TARTSGGRRTTA) are compositionally biased toward low complexity.

Functionally, BREX systems (bacteriophage exclusion) provide immunity against bacteriophage. Part of a type 2 BREX system. Previously called the phage growth limitation (Pgl) system, it confers protection against bacteriophage phiC31. The bacteria allows one cycle of phage infection, but subsequent cycles are impaired, protecting the original bacterial colony. The system undergoes high rates (10(-3) to 10(-4)) of phase reversion, i.e. loss and regain of phiC31 resistance. When the pglW-pglX-pglY-pglZ genes are transformed into a susceptible S.lividans (strain 1326) they confer resistance to infection by phage phiC31 and phiBT1; all 4 genes are necessary. In terms of biological role, hydrolyzes ATP but not AMP, ADP, GMP, GDP or GTP; activity is inhibited by the non-hydrolyzable ATP analog 5-adenylyl beta,gamma-imidodiphosphate. The protein is ATPase PglY of Streptomyces coelicolor (strain ATCC BAA-471 / A3(2) / M145).